Here is a 330-residue protein sequence, read N- to C-terminus: Nitrilase 3 (330 aa).

In terms of domain architecture, CN hydrolase spans 4–273 (VKAAAVQISP…EGEVIVDLDF (270 aa)). Glu-44 serves as the catalytic Proton acceptor. The Proton donor role is filled by Lys-128. The Nucleophile role is filled by Cys-162. Residues 310–330 (RAAHPVSGAEQGPEDLRTPAA) form a disordered region.

The protein belongs to the carbon-nitrogen hydrolase superfamily. Nitrilase family.

The enzyme catalyses a nitrile + 2 H2O = a carboxylate + NH4(+). In terms of biological role, nitrilases catalyze the mild hydrolytic conversion of organonitriles directly to the corresponding carboxylic acids. The polypeptide is Nitrilase 3 (Unknown prokaryotic organism).